Reading from the N-terminus, the 131-residue chain is DNA-directed RNA polymerases I, II, and III subunit RPABC2 (131 aa).

Residues 1–24 (MDDADYDNDDVGGDDFDDVDEDVD) are disordered.

This sequence belongs to the archaeal Rpo6/eukaryotic RPB6 RNA polymerase subunit family. In terms of assembly, component of the RNA polymerase I (Pol I), RNA polymerase II (Pol II) and RNA polymerase III (Pol III) complexes consisting of at least 13, 12 and 17 subunits, respectively.

The protein resides in the nucleus. DNA-dependent RNA polymerases catalyze the transcription of DNA into RNA using the four ribonucleoside triphosphates as substrates. Common component of RNA polymerases I, II and III which synthesize ribosomal RNA precursors, mRNA precursors and many functional non-coding RNAs, and small RNAs, such as 5S rRNA and tRNAs, respectively. Pol II is the central component of the basal RNA polymerase II transcription machinery. Pols are composed of mobile elements that move relative to each other. In Pol II, Polr2F/RPB6 is part of the clamp element and together with parts of Polr2A/RPB1 and RPB2 forms a pocket to which the Polr2D/RPB4-Polr2G/RPB7 subcomplex binds. The protein is DNA-directed RNA polymerases I, II, and III subunit RPABC2 of Drosophila melanogaster (Fruit fly).